Consider the following 245-residue polypeptide: 3-deoxy-manno-octulosonate cytidylyltransferase (245 aa).

This sequence belongs to the KdsB family.

It localises to the cytoplasm. It catalyses the reaction 3-deoxy-alpha-D-manno-oct-2-ulosonate + CTP = CMP-3-deoxy-beta-D-manno-octulosonate + diphosphate. Its pathway is nucleotide-sugar biosynthesis; CMP-3-deoxy-D-manno-octulosonate biosynthesis; CMP-3-deoxy-D-manno-octulosonate from 3-deoxy-D-manno-octulosonate and CTP: step 1/1. The protein operates within bacterial outer membrane biogenesis; lipopolysaccharide biosynthesis. In terms of biological role, activates KDO (a required 8-carbon sugar) for incorporation into bacterial lipopolysaccharide in Gram-negative bacteria. The polypeptide is 3-deoxy-manno-octulosonate cytidylyltransferase (Rhodopseudomonas palustris (strain HaA2)).